Consider the following 367-residue polypeptide: o-succinylbenzoate synthase (367 aa).

Lys164 functions as the Proton donor in the catalytic mechanism. The Mg(2+) site is built by Asp189, Glu214, and Asp239. Catalysis depends on Lys263, which acts as the Proton acceptor.

The protein belongs to the mandelate racemase/muconate lactonizing enzyme family. MenC type 2 subfamily. In terms of assembly, homodimer. A divalent metal cation serves as cofactor.

The enzyme catalyses (1R,6R)-6-hydroxy-2-succinyl-cyclohexa-2,4-diene-1-carboxylate = 2-succinylbenzoate + H2O. It functions in the pathway quinol/quinone metabolism; 1,4-dihydroxy-2-naphthoate biosynthesis; 1,4-dihydroxy-2-naphthoate from chorismate: step 4/7. The protein operates within quinol/quinone metabolism; menaquinone biosynthesis. Its function is as follows. Converts 2-succinyl-6-hydroxy-2,4-cyclohexadiene-1-carboxylate (SHCHC) to 2-succinylbenzoate (OSB). Also acts as a N-succinylamino acid racemase (NSAR) that catalyzes the racemization of N-succinyl-L-phenylglycine. Since the gene is encoded in a menaquinone synthesis operon, OSB synthase is probably the physiological activity. A pathway that requires NSAR activity has not been identified in this species, so whether NSAR is also a biological activity is unknown. The chain is o-succinylbenzoate synthase from Enterococcus faecalis (strain ATCC 700802 / V583).